The chain runs to 90 residues: U7-theraphotoxin-Hhn1a 5 (90 aa).

The N-terminal stretch at 1 to 19 (MKTAIFTVVLALAVFAVLS) is a signal peptide. The propeptide occupies 20-50 (FGWEANEKALSEESTELIHEKEAASETEARE). Cystine bridges form between cysteine 51–cysteine 65, cysteine 58–cysteine 70, and cysteine 64–cysteine 81.

This sequence belongs to the neurotoxin 10 (Hwtx-1) family. 13 (Hntx-13) subfamily. As to expression, expressed by the venom gland.

It localises to the secreted. Its function is as follows. Ion channel inhibitor. The protein is U7-theraphotoxin-Hhn1a 5 of Cyriopagopus hainanus (Chinese bird spider).